An 81-amino-acid polypeptide reads, in one-letter code: ATP synthase subunit c (81 aa).

The next 2 membrane-spanning stretches (helical) occupy residues 6-26 (AAAS…GPGI) and 57-77 (LAFM…LLFA).

This sequence belongs to the ATPase C chain family. As to quaternary structure, F-type ATPases have 2 components, F(1) - the catalytic core - and F(0) - the membrane proton channel. F(1) has five subunits: alpha(3), beta(3), gamma(1), delta(1), epsilon(1). F(0) has four main subunits: a(1), b(1), b'(1) and c(10-14). The alpha and beta chains form an alternating ring which encloses part of the gamma chain. F(1) is attached to F(0) by a central stalk formed by the gamma and epsilon chains, while a peripheral stalk is formed by the delta, b and b' chains.

The protein localises to the cellular thylakoid membrane. Its function is as follows. F(1)F(0) ATP synthase produces ATP from ADP in the presence of a proton or sodium gradient. F-type ATPases consist of two structural domains, F(1) containing the extramembraneous catalytic core and F(0) containing the membrane proton channel, linked together by a central stalk and a peripheral stalk. During catalysis, ATP synthesis in the catalytic domain of F(1) is coupled via a rotary mechanism of the central stalk subunits to proton translocation. Key component of the F(0) channel; it plays a direct role in translocation across the membrane. A homomeric c-ring of between 10-14 subunits forms the central stalk rotor element with the F(1) delta and epsilon subunits. The sequence is that of ATP synthase subunit c from Synechocystis sp. (strain ATCC 27184 / PCC 6803 / Kazusa).